The primary structure comprises 1170 residues: Thrombospondin-1 (1170 aa).

An N-terminal signal peptide occupies residues 1 to 18 (MGLAWGLGVLFLMHVCGT). Positions 47–95 (RLVKGPDPSSPAFRIEDANLIPPVPDDKFQDLVDAVRAEKGFLLLASLR) are heparin-binding. In terms of domain architecture, Laminin G-like spans 65 to 270 (NLIPPVPDDK…HKTKDLQAIC (206 aa)). The cysteines at positions 171 and 232 are disulfide-linked. N-linked (GlcNAc...) asparagine glycosylation is found at asparagine 248 and asparagine 360. One can recognise a VWFC domain in the interval 316-373 (PLCYHNGVQYRNNEEWTVDSCTECHCQNSVTICKKVSCPIMPCSNATVPDGECCPRCW). TSP type-1 domains lie at 379-429 (DDGW…QECD), 435-490 (DGGW…DACP), and 492-547 (NGGW…QDCP). C-linked (Man) tryptophan glycosylation is present at tryptophan 385. Intrachain disulfides connect cysteine 391–cysteine 423, cysteine 395–cysteine 428, and cysteine 406–cysteine 413. Residue serine 394 is glycosylated (O-linked (Fuc...) serine). 2 C-linked (Man) tryptophan glycosylation sites follow: tryptophan 438 and tryptophan 441. Disulfide bonds link cysteine 447–cysteine 484, cysteine 451–cysteine 489, and cysteine 462–cysteine 474. Threonine 450 is a glycosylation site (O-linked (Fuc...) threonine). C-linked (Man) tryptophan glycosylation is present at tryptophan 498. 21 cysteine pairs are disulfide-bonded: cysteine 504–cysteine 541, cysteine 508–cysteine 546, cysteine 519–cysteine 531, cysteine 551–cysteine 562, cysteine 556–cysteine 572, cysteine 575–cysteine 586, cysteine 592–cysteine 608, cysteine 599–cysteine 617, cysteine 620–cysteine 644, cysteine 650–cysteine 663, cysteine 657–cysteine 676, cysteine 678–cysteine 689, cysteine 705–cysteine 713, cysteine 718–cysteine 738, cysteine 754–cysteine 774, cysteine 777–cysteine 797, cysteine 813–cysteine 833, cysteine 836–cysteine 856, cysteine 874–cysteine 894, cysteine 910–cysteine 930, and cysteine 946–cysteine 1167. A glycan (O-linked (Fuc...) threonine) is linked at threonine 507. The interval 531–1152 (CVGDVTENQI…YAGGRLGLFV (622 aa)) is involved in retention in extracellular matrix (ECM); involved in trimer formation. One can recognise an EGF-like 1 domain in the interval 547–587 (PIDGCLSNPCFAGVKCTSYPDGSWKCGACPPGYSGNGIQCT). O-linked (Xyl) serine glycosylation occurs at serine 553. Residues 646–690 (PRNPCTDGTHDCNKNAKCNYLGHYSDPMYRCECKPGYAGNGIICG) form the EGF-like 2 domain. TSP type-3 repeat units follow at residues 691–726 (EDTDLDGWPNENLVCVANATYHCKKDNCPNLPNSGQ), 727–762 (EDYDKDGIGDACDDDDDNDKIPDDRDNCPFHYNPAQ), 763–785 (YDYDRDDVGDRCDNCPYNHNPDQ), 786–821 (ADTDNNGEGDACAADIDGDGILNERDNCQYVYNVDQ), 822–844 (RDTDMDGVGDQCDNCPLEHNPDQ), 845–882 (LDSDSDRIGDTCDNNQDIDEDGHQNNLDNCPYVPNANQ), 883–918 (ADHDKDGKGDACDHDDDNDGIPDDKDNCRLVPNPDQ), and 919–954 (KDSDGDGRGDACKDDFDHDSVPDIDDICPENVDISE). Asparagine 708 carries N-linked (GlcNAc...) asparagine glycosylation. The interval 839–934 (EHNPDQLDSD…GRGDACKDDF (96 aa)) is disordered. Composition is skewed to basic and acidic residues over residues 840-854 (HNPDQLDSDSDRIGD), 883-894 (ADHDKDGKGDAC), and 917-934 (DQKDSDGDGRGDACKDDF). The short motif at 926 to 928 (RGD) is the Cell attachment site element. The TSP C-terminal domain occupies 958–1170 (RRFQMIPLDP…SDLKYECRDP (213 aa)). N-linked (GlcNAc...) asparagine glycosylation is present at asparagine 1067.

Belongs to the thrombospondin family. As to quaternary structure, homotrimer; disulfide-linked. Can bind to fibrinogen, fibronectin, laminin, type V collagen and integrins alpha-V/beta-1, alpha-V/beta-3 and alpha-IIb/beta-3. Binds heparin. Interacts (via the C-terminal domain) with CD47. Interacts (via the TSP type I repeats) with CD36; the interaction conveys an antiangiogenic effect. Interacts (via the TSP type I repeats) with HRG; the interaction blocks the antiangiogenic effect of THBS1 with CD36. Interacts with ATF6 (via lumenal domain). Interacts with FN1; this interaction is enhanced by TNFAIP6, which may act as a bridging molecule between FN1 and THBS1. Interacts with SIRPA; the interaction stimulates phosphorylation of SIRPA. As to expression, expressed by platelets (at protein level). Expressed by monocyte-derived immature and mature dendritic cells (at protein level).

It is found in the secreted. The protein localises to the cell surface. The protein resides in the extracellular space. Its subcellular location is the extracellular matrix. It localises to the endoplasmic reticulum. It is found in the sarcoplasmic reticulum. In terms of biological role, adhesive glycoprotein that mediates cell-to-cell and cell-to-matrix interactions. Multifunctional, involved in inflammation, angiogenesis, wound healing, reactive oxygen species (ROS) signaling, nitrous oxide (NO) signaling, apoptosis, senescence, aging, cellular self-renewal, stemness, and cardiovascular and metabolic homeostasis. Negatively modulates dendritic cell activation and cytokine release, as part of an autocrine feedback loop, contributing to the resolution of inflammation and immune homeostasis. Ligand for receptor CD47. Modulates nitrous oxide (NO) signaling via CD47, hence playing a role as a pressor agent, supporting blood pressure. Plays a role in endothelial cell senescence, acting via CD47, by increasing the abundance and activation of NADPH oxidase NOX1, and so generating excess ROS. Inhibits stem cell self-renewal, acting via CD47 signaling, probably by regulation of the stem cell transcription factors POU5F1/OCT4, SOX2, MYC/c-Myc and KLF4. Negatively modulates wound healing, acting via CD47. Ligand for receptor CD36. Involved in inducing apoptosis in podocytes in response to elevated free fatty acids, acting via CD36. Plays a role in suppressing angiogenesis, acting, depending on context, via CD36 or CD47. Promotes cellular senescence in a TP53-CDKN1A-RB1 signaling-dependent manner. Ligand for immunoglobulin-like cell surface receptor SIRPA. Involved in ROS signaling in non-phagocytic cells, stimulating NADPH oxidase-derived ROS production, acting via interaction with SIRPA. Plays a role in metabolic dysfunction in diet-induced obesity, perhaps acting by exacerbating adipose inflammatory activity; its effects may be mediated, at least in part, through enhanced adipocyte proliferation. Plays a role in ER stress response, via its interaction with the activating transcription factor 6 alpha (ATF6) which produces adaptive ER stress response factors. May be involved in age-related conditions, including metabolic dysregulation, during normal aging. The chain is Thrombospondin-1 from Homo sapiens (Human).